Reading from the N-terminus, the 218-residue chain is Small ribosomal subunit protein uS3c (218 aa).

Positions 43 to 118 (IKNYVQKNTR…KLNIAITRIG (76 aa)) constitute a KH type-2 domain.

Belongs to the universal ribosomal protein uS3 family. Part of the 30S ribosomal subunit.

It localises to the plastid. It is found in the chloroplast. This is Small ribosomal subunit protein uS3c (rps3) from Gossypium barbadense (Sea Island cotton).